The chain runs to 467 residues: Gamma-aminobutyric acid receptor subunit gamma-3 (467 aa).

The N-terminal stretch at 1–17 is a signal peptide; the sequence is MAAKLLLLLCLFSGLHA. The Extracellular segment spans residues 18–256; the sequence is RSRRVEEDDS…FELSRRMGYF (239 aa). An N-linked (GlcNAc...) asparagine glycan is attached at N110. C171 and C185 form a disulfide bridge. N-linked (GlcNAc...) asparagine glycosylation occurs at N228. The chain crosses the membrane as a helical span at residues 257–277; it reads TIQTYIPCILTVVLSWVSFWI. Residues 278 to 283 lie on the Cytoplasmic side of the membrane; the sequence is KKDATP. The helical transmembrane segment at 284-303 threads the bilayer; the sequence is ARTTLGITTVLTMTTLSTIA. The Extracellular segment spans residues 304-311; sequence RKSLPRVS. A helical transmembrane segment spans residues 312-332; it reads YVTAMDLFVTVCFLFVFAALM. The Cytoplasmic segment spans residues 333–446; sequence EYATLNYYSS…DVSELDSYSR (114 aa). Residues 447–467 form a helical membrane-spanning segment; the sequence is VFFPTSFLLFNLVYWVGYLYL.

Belongs to the ligand-gated ion channel (TC 1.A.9) family. Gamma-aminobutyric acid receptor (TC 1.A.9.5) subfamily. GABRG3 sub-subfamily. Heteropentamer, formed by a combination of alpha (GABRA1-6), beta (GABRB1-3), gamma (GABRG1-3), delta (GABRD), epsilon (GABRE), rho (GABRR1-3), pi (GABRP) and theta (GABRQ) chains, each subunit exhibiting distinct physiological and pharmacological properties. May be palmitoylated. In terms of tissue distribution, expressed in brain.

Its subcellular location is the postsynaptic cell membrane. The protein localises to the cell membrane. It carries out the reaction chloride(in) = chloride(out). Allosterically potentiated by alphaxalone. Allosterically inhibited by pregnenolone sulfate. Inhibited by zinc and lanthanum. Functionally, gamma subunit of the heteropentameric ligand-gated chloride channel gated by gamma-aminobutyric acid (GABA), a major inhibitory neurotransmitter in the brain. GABA-gated chloride channels, also named GABA(A) receptors (GABAAR), consist of five subunits arranged around a central pore and contain GABA active binding site(s) located at the alpha and beta subunit interface(s). When activated by GABA, GABAARs selectively allow the flow of chloride across the cell membrane down their electrochemical gradient. This is Gamma-aminobutyric acid receptor subunit gamma-3 from Rattus norvegicus (Rat).